A 386-amino-acid polypeptide reads, in one-letter code: Succinate--CoA ligase [ADP-forming] subunit beta (386 aa).

The ATP-grasp domain maps to 9–244 (KDLLTSYQLP…PSQENIRDVL (236 aa)). ATP is bound by residues Lys46, 53–55 (GRG), Val102, and Glu107. Mg(2+)-binding residues include Asn199 and Asp213. Residues Asn264 and 321-323 (GIM) contribute to the substrate site.

This sequence belongs to the succinate/malate CoA ligase beta subunit family. Heterotetramer of two alpha and two beta subunits. Mg(2+) is required as a cofactor.

The catalysed reaction is succinate + ATP + CoA = succinyl-CoA + ADP + phosphate. It catalyses the reaction GTP + succinate + CoA = succinyl-CoA + GDP + phosphate. It functions in the pathway carbohydrate metabolism; tricarboxylic acid cycle; succinate from succinyl-CoA (ligase route): step 1/1. Its function is as follows. Succinyl-CoA synthetase functions in the citric acid cycle (TCA), coupling the hydrolysis of succinyl-CoA to the synthesis of either ATP or GTP and thus represents the only step of substrate-level phosphorylation in the TCA. The beta subunit provides nucleotide specificity of the enzyme and binds the substrate succinate, while the binding sites for coenzyme A and phosphate are found in the alpha subunit. The chain is Succinate--CoA ligase [ADP-forming] subunit beta from Chlamydia muridarum (strain MoPn / Nigg).